A 910-amino-acid chain; its full sequence is SWI/SNF-related matrix-associated actin-dependent regulator of chromatin subfamily A-like protein 1 (910 aa).

The segment at 1 to 170 (MSLPLTEEQR…GRPSTSGQSI (170 aa)) is disordered. N-acetylserine is present on serine 2. Mediates interaction with RPA2 stretches follow at residues 2 to 30 (SLPLTEEQRKKIEENRQKALARRAEKLWA) and 5 to 30 (LTEEQRKKIEENRQKALARRAEKLWA). Residues 3-28 (LPLTEEQRKKIEENRQKALARRAEKL) adopt a coiled-coil conformation. Residues 7–29 (EEQRKKIEENRQKALARRAEKLW) show a composition bias toward basic and acidic residues. Polar residues-rich tracts occupy residues 32–54 (QPQSTASGSSAARPSQCKQNSLL) and 70–95 (SKGQNLNNSLPAAQRPHSSPCFQPST). Residues 97–107 (EEAKGLWKSEG) are compositionally biased toward basic and acidic residues. Serine 117 carries the phosphoserine modification. Residues 120–131 (EVSNQQLLGSKS) show a composition bias toward polar residues. The span at 150–160 (FPRDPKLEAKA) shows a compositional bias: basic and acidic residues. Serine 164 carries the post-translational modification Phosphoserine. HARP domains lie at 198–268 (KASC…QPLE) and 284–355 (SLTF…DPLP). A Helicase ATP-binding domain is found at 402 to 557 (SFAISKRGRL…YTQIIAVKPT (156 aa)). 415 to 422 (DDMGLGKT) lines the ATP pocket. A DESH box motif is present at residues 506-509 (DESH). Positions 601 to 618 (RRLKSDVLSQLPAKQRKM) match the Nuclear localization signal motif. Residues 672 to 825 (YILDLLESGR…ETNFSEMTEA (154 aa)) form the Helicase C-terminal domain. The span at 865-875 (GSTSGTSGNSS) shows a compositional bias: low complexity. The tract at residues 865-890 (GSTSGTSGNSSQELGDITDENALADS) is disordered.

Belongs to the SNF2/RAD54 helicase family. SMARCAL1 subfamily. As to quaternary structure, interacts with RPA2; the interaction is direct and mediates the recruitment by the RPA complex of SMARCAL1 to sites of DNA damage. In terms of processing, DNA damage-regulated phosphorylation by kinases that may include ATM, ATR and PRKDC.

It is found in the nucleus. The catalysed reaction is ATP + H2O = ADP + phosphate + H(+). In terms of biological role, ATP-dependent annealing helicase that binds selectively to fork DNA relative to ssDNA or dsDNA and catalyzes the rewinding of the stably unwound DNA. Rewinds single-stranded DNA bubbles that are stably bound by replication protein A (RPA). Acts throughout the genome to reanneal stably unwound DNA, performing the opposite reaction of many enzymes, such as helicases and polymerases, that unwind DNA. May play an important role in DNA damage response by acting at stalled replication forks. The protein is SWI/SNF-related matrix-associated actin-dependent regulator of chromatin subfamily A-like protein 1 (Smarcal1) of Rattus norvegicus (Rat).